The following is a 160-amino-acid chain: MPSFDIVSEVAMNEVQNAVENANREIQTRFDFRGVDASFELNKEEIKMGADADFQLKQMIEILRDKIVKRGMDTSCLDVGDVEHSGKRYFQVVKLKQGIETDVAKKLIKIIKDAKIKVQTAIQGDEIRVTGKKRDDLQEAMALVRQAELGQAFQFTNFRD.

Belongs to the YajQ family.

In terms of biological role, nucleotide-binding protein. The sequence is that of Nucleotide-binding protein Tola_0795 from Tolumonas auensis (strain DSM 9187 / NBRC 110442 / TA 4).